The following is a 146-amino-acid chain: ATP synthase epsilon chain 2 (146 aa).

Belongs to the ATPase epsilon chain family. In terms of assembly, F-type ATPases have 2 components, CF(1) - the catalytic core - and CF(0) - the membrane proton channel. CF(1) has five subunits: alpha(3), beta(3), gamma(1), delta(1), epsilon(1). CF(0) has three main subunits: a, b and c.

The protein localises to the cell inner membrane. Produces ATP from ADP in the presence of a proton gradient across the membrane. This is ATP synthase epsilon chain 2 from Cereibacter sphaeroides (strain ATCC 17023 / DSM 158 / JCM 6121 / CCUG 31486 / LMG 2827 / NBRC 12203 / NCIMB 8253 / ATH 2.4.1.) (Rhodobacter sphaeroides).